A 748-amino-acid polypeptide reads, in one-letter code: Catalase-peroxidase (748 aa).

The tryptophyl-tyrosyl-methioninium (Trp-Tyr) (with M-268) cross-link spans 91-242; the sequence is WHSAGTYRIG…LAAVQMGLIY (152 aa). His-92 serves as the catalytic Proton acceptor. The interval 194–223 is disordered; that stretch reads DRYGKGKGSSSQGEIPADAHRHGQEQARTA. A cross-link (tryptophyl-tyrosyl-methioninium (Tyr-Met) (with W-91)) is located at residues 242–268; the sequence is YVNPEGPEGNPDPLAAAHDIRETFARM. His-283 provides a ligand contact to heme b. The segment at 288–310 is disordered; sequence THGAGDAKHVGREPEGEDMDSQG. The span at 290-301 shows a compositional bias: basic and acidic residues; the sequence is GAGDAKHVGREP.

It belongs to the peroxidase family. Peroxidase/catalase subfamily. As to quaternary structure, homodimer or homotetramer. The cofactor is heme b. In terms of processing, formation of the three residue Trp-Tyr-Met cross-link is important for the catalase, but not the peroxidase activity of the enzyme.

It catalyses the reaction H2O2 + AH2 = A + 2 H2O. The catalysed reaction is 2 H2O2 = O2 + 2 H2O. In terms of biological role, bifunctional enzyme with both catalase and broad-spectrum peroxidase activity. The protein is Catalase-peroxidase of Herbaspirillum seropedicae.